The chain runs to 310 residues: Cytochrome P450 monooxygenase ppzG (310 aa).

C288 is a binding site for heme.

This sequence belongs to the cytochrome P450 family. Heme serves as cofactor.

It functions in the pathway secondary metabolite biosynthesis. In terms of biological role, cytochrome P450 monooxygenase; part of the gene cluster that mediates the biosynthesis of pyrrolopyrazines, secondary metabolites showing insecticidal activity. The role of ppzG within the pathway has still to be determined. The single multifunctional NRPS ppzA is sufficient to produce peramine via condensation of 1-pyrroline-5-carboxylate and arginine, N-methylation of the alpha-amino group of arginine and reduction of the thioester and the cyclization to form an iminium ion resulting in release from the peptide synthetase. Deprotonation of this intermediate and oxidation of the pyrroline ring would give rise to peramine. In Epichloe species that produce only peramine, the peramine synthetase gene is not localized in a gene cluster, in contrast to Metarhizium species that contain additional pyrrolopyrazine biosynthesis genes. The 2-oxoglutarate-Fe(II) type oxidoreductase ppzC hydroxylates peramine to yield the newly identified compound 8-hydroxyperamine whereas ppzD converts L-proline into trans-4-hydroxy-L-proline, a precursor of peramine biosynthesis. This chain is Cytochrome P450 monooxygenase ppzG (ppzG), found in Metarhizium majus (strain ARSEF 297).